The primary structure comprises 429 residues: 4-hydroxy-3-methylbut-2-en-1-yl diphosphate synthase (flavodoxin) (429 aa).

[4Fe-4S] cluster is bound by residues Cys323, Cys326, Cys369, and Glu376.

The protein belongs to the IspG family. It depends on [4Fe-4S] cluster as a cofactor.

The enzyme catalyses (2E)-4-hydroxy-3-methylbut-2-enyl diphosphate + oxidized [flavodoxin] + H2O + 2 H(+) = 2-C-methyl-D-erythritol 2,4-cyclic diphosphate + reduced [flavodoxin]. Its pathway is isoprenoid biosynthesis; isopentenyl diphosphate biosynthesis via DXP pathway; isopentenyl diphosphate from 1-deoxy-D-xylulose 5-phosphate: step 5/6. In terms of biological role, converts 2C-methyl-D-erythritol 2,4-cyclodiphosphate (ME-2,4cPP) into 1-hydroxy-2-methyl-2-(E)-butenyl 4-diphosphate. The sequence is that of 4-hydroxy-3-methylbut-2-en-1-yl diphosphate synthase (flavodoxin) from Wolbachia sp. subsp. Brugia malayi (strain TRS).